We begin with the raw amino-acid sequence, 185 residues long: Putative RNA (cytidine(34)-2'-O)-methyltransferase (185 aa).

Positions 80, 105, and 126 each coordinate S-adenosyl-L-methionine.

It belongs to the class IV-like SAM-binding methyltransferase superfamily. RNA methyltransferase TrmH family. TrmL subfamily.

The protein resides in the cytoplasm. The catalysed reaction is cytidine(34) in tRNA + S-adenosyl-L-methionine = 2'-O-methylcytidine(34) in tRNA + S-adenosyl-L-homocysteine + H(+). It carries out the reaction 5-carboxymethylaminomethyluridine(34) in tRNA(Leu) + S-adenosyl-L-methionine = 5-carboxymethylaminomethyl-2'-O-methyluridine(34) in tRNA(Leu) + S-adenosyl-L-homocysteine + H(+). Could methylate the ribose at the nucleotide 34 wobble position in tRNA. This chain is Putative RNA (cytidine(34)-2'-O)-methyltransferase, found in Lactobacillus gasseri (strain ATCC 33323 / DSM 20243 / BCRC 14619 / CIP 102991 / JCM 1131 / KCTC 3163 / NCIMB 11718 / NCTC 13722 / AM63).